The sequence spans 583 residues: Threonine--tRNA ligase (583 aa).

The segment at 185–478 is catalytic; it reads DHRKLGRELD…LVEHYGGAFP (294 aa). Residues C278, H329, and H455 each contribute to the Zn(2+) site.

This sequence belongs to the class-II aminoacyl-tRNA synthetase family. Homodimer. The cofactor is Zn(2+).

Its subcellular location is the cytoplasm. The catalysed reaction is tRNA(Thr) + L-threonine + ATP = L-threonyl-tRNA(Thr) + AMP + diphosphate + H(+). Its function is as follows. Catalyzes the attachment of threonine to tRNA(Thr) in a two-step reaction: L-threonine is first activated by ATP to form Thr-AMP and then transferred to the acceptor end of tRNA(Thr). Also edits incorrectly charged L-seryl-tRNA(Thr). This is Threonine--tRNA ligase from Borrelia hermsii (strain HS1 / DAH).